Consider the following 244-residue polypeptide: 5-oxoprolinase subunit A (244 aa).

Belongs to the LamB/PxpA family. In terms of assembly, forms a complex composed of PxpA, PxpB and PxpC.

The enzyme catalyses 5-oxo-L-proline + ATP + 2 H2O = L-glutamate + ADP + phosphate + H(+). Catalyzes the cleavage of 5-oxoproline to form L-glutamate coupled to the hydrolysis of ATP to ADP and inorganic phosphate. The protein is 5-oxoprolinase subunit A of Escherichia coli O7:K1 (strain IAI39 / ExPEC).